We begin with the raw amino-acid sequence, 173 residues long: Nicotinamide-nucleotide adenylyltransferase (173 aa).

It belongs to the archaeal NMN adenylyltransferase family.

Its subcellular location is the cytoplasm. The catalysed reaction is beta-nicotinamide D-ribonucleotide + ATP + H(+) = diphosphate + NAD(+). Its pathway is cofactor biosynthesis; NAD(+) biosynthesis; NAD(+) from nicotinamide D-ribonucleotide: step 1/1. This chain is Nicotinamide-nucleotide adenylyltransferase, found in Methanosarcina barkeri (strain Fusaro / DSM 804).